The sequence spans 80 residues: MARKKASIDFEQSLADLQALVERLENGELSLEDSLAAFEQGIALTRDCQGALAQAEQKVQILLERDGELAAQPFDAEPEA.

Belongs to the XseB family. In terms of assembly, heterooligomer composed of large and small subunits.

It is found in the cytoplasm. The enzyme catalyses Exonucleolytic cleavage in either 5'- to 3'- or 3'- to 5'-direction to yield nucleoside 5'-phosphates.. Its function is as follows. Bidirectionally degrades single-stranded DNA into large acid-insoluble oligonucleotides, which are then degraded further into small acid-soluble oligonucleotides. This Pseudomonas putida (strain W619) protein is Exodeoxyribonuclease 7 small subunit.